Here is a 408-residue protein sequence, read N- to C-terminus: LL-diaminopimelate aminotransferase (408 aa).

Residues tyrosine 15 and glycine 42 each coordinate substrate. Residues tyrosine 72, 108-109, tyrosine 132, asparagine 187, tyrosine 218, and 246-248 each bind pyridoxal 5'-phosphate; these read SK and SFS. Residues lysine 109, tyrosine 132, and asparagine 187 each coordinate substrate. Lysine 249 is modified (N6-(pyridoxal phosphate)lysine). The pyridoxal 5'-phosphate site is built by arginine 257 and asparagine 292. Asparagine 292 and arginine 388 together coordinate substrate.

Belongs to the class-I pyridoxal-phosphate-dependent aminotransferase family. LL-diaminopimelate aminotransferase subfamily. In terms of assembly, homodimer. Requires pyridoxal 5'-phosphate as cofactor.

The enzyme catalyses (2S,6S)-2,6-diaminopimelate + 2-oxoglutarate = (S)-2,3,4,5-tetrahydrodipicolinate + L-glutamate + H2O + H(+). The protein operates within amino-acid biosynthesis; L-lysine biosynthesis via DAP pathway; LL-2,6-diaminopimelate from (S)-tetrahydrodipicolinate (aminotransferase route): step 1/1. Involved in the synthesis of meso-diaminopimelate (m-DAP or DL-DAP), required for both lysine and peptidoglycan biosynthesis. Catalyzes the direct conversion of tetrahydrodipicolinate to LL-diaminopimelate. The polypeptide is LL-diaminopimelate aminotransferase (Prochlorococcus marinus (strain MIT 9301)).